Consider the following 93-residue polypeptide: UPF0473 protein CHY_0543 (93 aa).

It belongs to the UPF0473 family.

The polypeptide is UPF0473 protein CHY_0543 (Carboxydothermus hydrogenoformans (strain ATCC BAA-161 / DSM 6008 / Z-2901)).